Consider the following 242-residue polypeptide: Ribosomal RNA small subunit methyltransferase G (242 aa).

S-adenosyl-L-methionine contacts are provided by residues glycine 82, phenylalanine 87, 133–134, and arginine 152; that span reads AE.

It belongs to the methyltransferase superfamily. RNA methyltransferase RsmG family.

It is found in the cytoplasm. In terms of biological role, specifically methylates the N7 position of a guanine in 16S rRNA. The sequence is that of Ribosomal RNA small subunit methyltransferase G from Acetivibrio thermocellus (strain ATCC 27405 / DSM 1237 / JCM 9322 / NBRC 103400 / NCIMB 10682 / NRRL B-4536 / VPI 7372) (Clostridium thermocellum).